Reading from the N-terminus, the 442-residue chain is Glutamate-1-semialdehyde 2,1-aminomutase (442 aa).

Lys-282 is subject to N6-(pyridoxal phosphate)lysine.

Belongs to the class-III pyridoxal-phosphate-dependent aminotransferase family. HemL subfamily. Homodimer. It depends on pyridoxal 5'-phosphate as a cofactor.

The protein resides in the cytoplasm. The catalysed reaction is (S)-4-amino-5-oxopentanoate = 5-aminolevulinate. It participates in porphyrin-containing compound metabolism; protoporphyrin-IX biosynthesis; 5-aminolevulinate from L-glutamyl-tRNA(Glu): step 2/2. In Polaromonas naphthalenivorans (strain CJ2), this protein is Glutamate-1-semialdehyde 2,1-aminomutase.